Consider the following 127-residue polypeptide: uncharacterized protein (127 aa).

Helical transmembrane passes span 1–21, 32–52, 68–88, and 100–120; these read MYII…YILV, TVAA…LYVF, AFFS…IILV, and ILDN…LVFK.

This sequence belongs to the GtrA family.

It is found in the cell membrane. This is an uncharacterized protein from Bacillus subtilis (strain 168).